A 243-amino-acid polypeptide reads, in one-letter code: MAVQISKKRKFVADGIFKAELNEFLTRELAEDGYSGVEVRVTPTRTEIIILATRTQNVLGEKGRRIRELTAVVQKRFGFPEGSVELYAEKVATRGLCAIAQAESLRYKLLGGLAVRRACYGVLRFIMESGAKGCEVVVSGKLRGQRAKSMKFVDGLMIHSGDPVNYYVDTAVRHVLLRQGVLGIKVKIMLPWDPSGKIGPKKPLPDHVSIVEPKDEILPTTPISEQKGGKPEPPAMPQPVPTA.

Residue Ala-2 is modified to N-acetylalanine. Phosphoserine is present on residues Ser-6 and Ser-35. The KH type-2 domain occupies 21–92 (LNEFLTRELA…SVELYAEKVA (72 aa)). Position 42 is a phosphothreonine (Thr-42). Lys-62 bears the N6-acetyllysine mark. Asymmetric dimethylarginine is present on residues Arg-64, Arg-65, and Arg-67. Position 70 is a phosphothreonine (Thr-70). Lys-90 participates in a covalent cross-link: Glycyl lysine isopeptide (Lys-Gly) (interchain with G-Cter in ubiquitin). At Ser-104 the chain carries Phosphoserine. Position 132 is an N6-succinyllysine (Lys-132). Residues 200 to 243 (PKKPLPDHVSIVEPKDEILPTTPISEQKGGKPEPPAMPQPVPTA) are disordered. Lys-202 is covalently cross-linked (Glycyl lysine isopeptide (Lys-Gly) (interchain with G-Cter in ubiquitin)). Ser-209 is modified (phosphoserine). A Glycyl lysine isopeptide (Lys-Gly) (interchain with G-Cter in SUMO2); alternate cross-link involves residue Lys-214. Lys-214 is covalently cross-linked (Glycyl lysine isopeptide (Lys-Gly) (interchain with G-Cter in ubiquitin); alternate). Residues Thr-220 and Thr-221 each carry the phosphothreonine modification. The residue at position 224 (Ser-224) is a Phosphoserine. Residue Lys-230 forms a Glycyl lysine isopeptide (Lys-Gly) (interchain with G-Cter in SUMO2) linkage. Residues 231–243 (PEPPAMPQPVPTA) are compositionally biased toward pro residues. Thr-242 carries the post-translational modification Phosphothreonine.

It belongs to the universal ribosomal protein uS3 family. In terms of assembly, component of the 40S small ribosomal subunit. Identified in a IGF2BP1-dependent mRNP granule complex containing untranslated mRNAs. Interacts with HNRPD. Interacts with PRMT1; the interaction methylates RPS3. Interacts with SUMO1; the interaction sumoylates RPS3. Interacts with UBC9. Interacts with CDK1; the interaction phosphorylates RPS3. Interacts with PRKCD; the interaction phosphorylates RPS3. Interacts with PKB/AKT; the interaction phosphorylates RPS3. Interacts with E2F1; the interaction occurs in the absence of nerve growth factor and increases transcription of pro-apoptotic proteins BCL2L11/BIM and HRK/Dp5. Interacts with the base excision repair proteins APEX1 and OGG1; interaction with OGG1 increases OGG1 N-glycosylase activity. Interacts with UNG; the interaction increases the uracil excision activity of UNG1. Interacts with HSP90; the interaction prevents the ubiquitination and proteasome-dependent degradation of RPS3 and is suppressed by increased ROS levels. Interacts with TOM70; the interaction promotes translocation of RPS3 to the mitochondrion. Interacts (via N-terminus) with RELA (via N-terminus); the interaction enhances the DNA-binding activity of the NF-kappa-B p65-p50 complex. Interacts with NFKBIA; the interaction is direct and may bridge the interaction between RPS3 and RELA. Interacts with IKKB; the interaction phosphorylates RPS3 and enhances its translocation to the nucleus. Interacts (via KH domain) with MDM2 and TP53. Interacts with TRADD. Interacts with ASCC3. Identified in a HCV IRES-mediated translation complex, at least composed of EIF3C, IGF2BP1, RPS3 and HCV RNA-replicon. Interacts with CRY1. In terms of processing, methylation by PRMT1 is required for import into the nucleolus and for ribosome assembly. Post-translationally, sumoylation by SUMO1 enhances protein stability through increased resistance to proteolysis. Sumoylation occurs at one or more of the three consensus sites, Lys-18, Lys-214 and Lys-230. Phosphorylation at Thr-221 by CDK1 occurs mainly in G2/M phase. Phosphorylation by PRKCD occurs on a non-ribosomal-associated form which results in translocation of RPS3 to the nucleus and enhances its endonuclease activity. Phosphorylated on Ser-209 by IKKB in response to activation of the NF-kappa-B p65-p50 complex which enhances the association of RPS3 with importin-alpha and mediates the nuclear translocation of RPS3. Phosphorylation by MAPK is required for translocation to the nucleus following exposure of cells to DNA damaging agents such as hydrogen peroxide. Phosphorylation by PKB/AKT mediates RPS3 nuclear translocation, enhances RPS3 endonuclease activity and suppresses RPS3-induced neuronal apoptosis. In terms of processing, ubiquitinated; ubiquitination is prevented by interaction with HSP90 which stabilizes the protein. Monoubiquitinated at Lys-214 by RNF10 and ZNF598 when a ribosome has stalled during translation of poly(A) sequences, leading to preclude synthesis of a long poly-lysine tail and initiate the ribosome quality control (RQC) pathway to degrade the potentially detrimental aberrant nascent polypeptide. Deubiquitinated at Lys-214 by USP10, preventing degradation by the proteasome and promoting 40S ribosome subunit recycling following ribosome dissociation. Post-translationally, ufmylated by UFL1.

It localises to the cytoplasm. The protein localises to the nucleus. Its subcellular location is the nucleolus. The protein resides in the mitochondrion inner membrane. It is found in the cytoskeleton. It localises to the spindle. It catalyses the reaction 2'-deoxyribonucleotide-(2'-deoxyribose 5'-phosphate)-2'-deoxyribonucleotide-DNA = a 3'-end 2'-deoxyribonucleotide-(2,3-dehydro-2,3-deoxyribose 5'-phosphate)-DNA + a 5'-end 5'-phospho-2'-deoxyribonucleoside-DNA + H(+). Endonuclease activity is inhibited by MgCl2 on apurinic/apyrimidinic DNA but not on UV-irradiated DNA. Component of the small ribosomal subunit. The ribosome is a large ribonucleoprotein complex responsible for the synthesis of proteins in the cell. Has endonuclease activity and plays a role in repair of damaged DNA. Cleaves phosphodiester bonds of DNAs containing altered bases with broad specificity and cleaves supercoiled DNA more efficiently than relaxed DNA. Displays high binding affinity for 7,8-dihydro-8-oxoguanine (8-oxoG), a common DNA lesion caused by reactive oxygen species (ROS). Has also been shown to bind with similar affinity to intact and damaged DNA. Stimulates the N-glycosylase activity of the base excision protein OGG1. Enhances the uracil excision activity of UNG1. Also stimulates the cleavage of the phosphodiester backbone by APEX1. When located in the mitochondrion, reduces cellular ROS levels and mitochondrial DNA damage. Has also been shown to negatively regulate DNA repair in cells exposed to hydrogen peroxide. Plays a role in regulating transcription as part of the NF-kappa-B p65-p50 complex where it binds to the RELA/p65 subunit, enhances binding of the complex to DNA and promotes transcription of target genes. Represses its own translation by binding to its cognate mRNA. Binds to and protects TP53/p53 from MDM2-mediated ubiquitination. Involved in spindle formation and chromosome movement during mitosis by regulating microtubule polymerization. Involved in induction of apoptosis through its role in activation of CASP8. Induces neuronal apoptosis by interacting with the E2F1 transcription factor and acting synergistically with it to up-regulate pro-apoptotic proteins BCL2L11/BIM and HRK/Dp5. Interacts with TRADD following exposure to UV radiation and induces apoptosis by caspase-dependent JNK activation. The protein is Small ribosomal subunit protein uS3 (RPS3) of Oryctolagus cuniculus (Rabbit).